A 91-amino-acid polypeptide reads, in one-letter code: Probable Fe(2+)-trafficking protein (91 aa).

The protein belongs to the Fe(2+)-trafficking protein family.

In terms of biological role, could be a mediator in iron transactions between iron acquisition and iron-requiring processes, such as synthesis and/or repair of Fe-S clusters in biosynthetic enzymes. This chain is Probable Fe(2+)-trafficking protein, found in Thiobacillus denitrificans (strain ATCC 25259 / T1).